A 286-amino-acid polypeptide reads, in one-letter code: Thiazole synthase (286 aa).

Residue lysine 122 is the Schiff-base intermediate with DXP of the active site. 1-deoxy-D-xylulose 5-phosphate contacts are provided by residues glycine 183, 209 to 210 (AG), and 231 to 232 (NT).

This sequence belongs to the ThiG family. As to quaternary structure, homotetramer. Forms heterodimers with either ThiH or ThiS.

Its subcellular location is the cytoplasm. The catalysed reaction is [ThiS sulfur-carrier protein]-C-terminal-Gly-aminoethanethioate + 2-iminoacetate + 1-deoxy-D-xylulose 5-phosphate = [ThiS sulfur-carrier protein]-C-terminal Gly-Gly + 2-[(2R,5Z)-2-carboxy-4-methylthiazol-5(2H)-ylidene]ethyl phosphate + 2 H2O + H(+). It functions in the pathway cofactor biosynthesis; thiamine diphosphate biosynthesis. In terms of biological role, catalyzes the rearrangement of 1-deoxy-D-xylulose 5-phosphate (DXP) to produce the thiazole phosphate moiety of thiamine. Sulfur is provided by the thiocarboxylate moiety of the carrier protein ThiS. In vitro, sulfur can be provided by H(2)S. The polypeptide is Thiazole synthase (Synechococcus elongatus (strain ATCC 33912 / PCC 7942 / FACHB-805) (Anacystis nidulans R2)).